We begin with the raw amino-acid sequence, 147 residues long: Large ribosomal subunit protein uL15 (147 aa).

Residues 1–58 (MKLFELKPAPGAKKRPKRVGRGESSGHGKTSTRGHKGQWARSGGGVRPGFEGGQMPLT) form a disordered region. A compositionally biased stretch (gly residues) spans 42–52 (SGGGVRPGFEG).

It belongs to the universal ribosomal protein uL15 family. In terms of assembly, part of the 50S ribosomal subunit.

Functionally, binds to the 23S rRNA. This chain is Large ribosomal subunit protein uL15, found in Caldicellulosiruptor saccharolyticus (strain ATCC 43494 / DSM 8903 / Tp8T 6331).